A 1132-amino-acid chain; its full sequence is Phycobiliprotein ApcE (1132 aa).

Cys196 lines the (2R,3E)-phycocyanobilin pocket. 4 consecutive PBS-linker domains span residues 253–433 (DQQG…FRKV), 514–692 (LGPK…EKQE), 709–887 (PDID…KQNN), and 940–1121 (GRGQ…SSLS).

Belongs to the phycobilisome linker protein family. Heterodimer of ApcF (a variant beta-allophycocyanin). Phycobilisomes of this organism are composed of a two cylinder core, from which six rods radiate. The core is mainly composed of allophycocyanin alpha and beta chains and of minor components. Contains one covalently linked bilin chromophore. This protein autochromophorylates.

It is found in the cellular thylakoid membrane. Functionally, this protein is postulated to act both as terminal energy acceptor (by its phycobilin-like domains) and as a linker polypeptide (by its repeats and arms) that stabilizes the phycobilisome core architecture. Has intrinsic bilin lyase activity. In Nostoc sp. (strain PCC 7120 / SAG 25.82 / UTEX 2576), this protein is Phycobiliprotein ApcE (apcE).